Reading from the N-terminus, the 4239-residue chain is Tenellin synthetase (4239 aa).

One can recognise a Ketosynthase family 3 (KS3) domain in the interval 15–454 (SEPIAIIGSA…GTNAHAIIER (440 aa)). Catalysis depends on for beta-ketoacyl synthase activity residues Cys189, His326, and His374. The malonyl-CoA:ACP transacylase (MAT) domain stretch occupies residues 589 to 923 (VFTGQGAQWP…ANDAVAFSTA (335 aa)). The tract at residues 993 to 1135 (HELLGRRTPD…GRIAVQLGAK (143 aa)) is N-terminal hotdog fold. The tract at residues 993–1310 (HELLGRRTPD…GFEVRAVGEP (318 aa)) is dehydratase (DH) domain. Residues 993-1313 (HELLGRRTPD…VRAVGEPDAS (321 aa)) enclose the PKS/mFAS DH domain. The active-site Proton acceptor; for dehydratase activity is the His1025. Residues 1158-1313 (LQQLDCEKLY…VRAVGEPDAS (156 aa)) are C-terminal hotdog fold. Catalysis depends on Asp1217, which acts as the Proton donor; for dehydratase activity. A methyltransferase (MT) domain region spans residues 1459 to 1652 (RLYTEDKGMH…FSGVDHIVHD (194 aa)). The segment at 2209-2382 (TYLMVGAAGG…AASIIHVGHV (174 aa)) is ketoreductase (KR) domain. The Carrier 1 domain maps to 2502–2582 (EAAVAALKGF…QLSALAAKLA (81 aa)). Ser2542 is subject to O-(pantetheine 4'-phosphoryl)serine. Disordered stretches follow at residues 2587 to 2629 (KKRA…EIAQ) and 2642 to 2712 (LEAS…FFTQ). Composition is skewed to polar residues over residues 2648–2662 (GGSS…SSVS) and 2670–2681 (ESTLQSSDNNGE). The span at 2682-2698 (STPSKSSNCNSDSGSDN) shows a compositional bias: low complexity. Residues 2723 to 3169 (REAPMSPAQS…SAQSVGDCVV (447 aa)) are condensation (C) domain. An adenylation (A) (KR) domain region spans residues 3203–3614 (CQQHSTKSAI…DGTLLCFGRI (412 aa)). The disordered stretch occupies residues 3728–3752 (EAAAATSPSNNNINNNTPSGGGGEK). The segment covering 3729–3745 (AAAATSPSNNNINNNTP) has biased composition (low complexity). In terms of domain architecture, Carrier 2 spans 3751–3835 (EKMTVRQGEL…GMARCVAEQR (85 aa)). Position 3795 is an O-(pantetheine 4'-phosphoryl)serine (Ser3795). Positions 3862–3892 (EKLQHSSASSSSSSSSSSSAGSSSTQRPRKT) are disordered. Positions 3867–3885 (SSASSSSSSSSSSSAGSSS) are enriched in low complexity. Residues 3899–4145 (LTGATGFLGG…LDFGQVDKVV (247 aa)) form a reductase (RED) domain region.

In the C-terminal section; belongs to the NRP synthetase family.

It participates in secondary metabolite biosynthesis. Functionally, hybrid PKS-NRPS synthetase; part of the gene cluster that mediates the biosynthesis of tenellin-type 2-pyridones, iron-chelating compounds involved in iron stress tolerance, competition with the natural competitor fungus Metarhizium robertsii and insect hosts infection. TenS catalyzes the assembly of the polyketide-amino acid backbone. Because tenS lacks a designated enoylreductase (ER) domain, the required activity is provided the enoyl reductase tenC. Upon formation of the polyketide backbone on the thiotemplate, the triketide is transferred to the NRPS module and linked to tyrosine to produce the pyrrolidine-2-dione intermediates, including pretellinin A, 11-hydropretellenin A, 12-hydropretellenin A, 13-hydropretellenin A, 14-hydropretellenin A, 12-oxopretellenin A and prototellinin D. The pathway begins with the assembly of the polyketide-amino acid backbone by the hybrid PKS-NRPS tenS with the help of the enoyl reductase tenC. These enzymes catalyze the synthesis of the pyrrolidine-2-dione intermediates pretellinin A, 11-hydropretellenin A, 12-hydropretellenin A, 13-hydropretellenin A, 14-hydropretellenin A, 12-oxopretellenin A and prototellinin D. The cytochrome P450 monooxygenase tenA then catalyzes an oxidative ring expansion of pretenellin A and 14-hydropretellenin A to form the 2-pyridone core, leading to pretenellin B and pyridovericin, respectively. The cytochrome P450 monooxygenase tenB is then required for the selective N-hydroxylation of the 2-pyridone nitrogen of yield tellinin and 15-hydroxytellenin (15-HT), respectively. The UDP-glucosyltransferase GT1 and the methyltransferase MT1, located outside the tenS gene cluster, contribute to the stepwise glycosylation and methylation of 15-HT to obtain the glycoside pyridovericin-N-O-(4-O-methyl-beta-D-glucopyranoside) (PMGP). Additional related compounds such as 1-O-methyl-15-HT, (8Z)-1-O-methyl-15-HT, and O-methyltenellin A are also produced but the enzymes involved in their biosynthesis have still to be determined. In Beauveria bassiana (White muscardine disease fungus), this protein is Tenellin synthetase.